A 213-amino-acid chain; its full sequence is Large ribosomal subunit protein uL1 (213 aa).

The protein belongs to the universal ribosomal protein uL1 family. Part of the 50S ribosomal subunit.

Functionally, binds directly to 23S rRNA. Probably involved in E site tRNA release. Protein L1 is also a translational repressor protein, it controls the translation of its operon by binding to its mRNA. The sequence is that of Large ribosomal subunit protein uL1 from Picrophilus torridus (strain ATCC 700027 / DSM 9790 / JCM 10055 / NBRC 100828 / KAW 2/3).